A 170-amino-acid chain; its full sequence is NADH-quinone oxidoreductase subunit B (170 aa).

Residues C37, C38, C102, and C131 each coordinate [4Fe-4S] cluster.

The protein belongs to the complex I 20 kDa subunit family. As to quaternary structure, NDH-1 is composed of 14 different subunits. Subunits NuoB, C, D, E, F, and G constitute the peripheral sector of the complex. The cofactor is [4Fe-4S] cluster.

It localises to the cell inner membrane. It carries out the reaction a quinone + NADH + 5 H(+)(in) = a quinol + NAD(+) + 4 H(+)(out). In terms of biological role, NDH-1 shuttles electrons from NADH, via FMN and iron-sulfur (Fe-S) centers, to quinones in the respiratory chain. The immediate electron acceptor for the enzyme in this species is believed to be ubiquinone. Couples the redox reaction to proton translocation (for every two electrons transferred, four hydrogen ions are translocated across the cytoplasmic membrane), and thus conserves the redox energy in a proton gradient. The protein is NADH-quinone oxidoreductase subunit B of Geobacter sulfurreducens (strain ATCC 51573 / DSM 12127 / PCA).